The chain runs to 274 residues: DegV domain-containing protein Cgl2349/cg2579 (274 aa).

The 257-residue stretch at 3-259 (VRVIVDSSAC…PGAVSVSAVF (257 aa)) folds into the DegV domain. Hexadecanoate is bound by residues Thr39 and Ser73.

In terms of assembly, monomer.

In terms of biological role, binds long-chain fatty acids, such as palmitate, and may play a role in lipid transport or fatty acid metabolism. The sequence is that of DegV domain-containing protein Cgl2349/cg2579 from Corynebacterium glutamicum (strain ATCC 13032 / DSM 20300 / JCM 1318 / BCRC 11384 / CCUG 27702 / LMG 3730 / NBRC 12168 / NCIMB 10025 / NRRL B-2784 / 534).